The sequence spans 130 residues: Transcription antitermination protein NusB (130 aa).

This sequence belongs to the NusB family.

Functionally, involved in transcription antitermination. Required for transcription of ribosomal RNA (rRNA) genes. Binds specifically to the boxA antiterminator sequence of the ribosomal RNA (rrn) operons. In Bacillus mycoides (strain KBAB4) (Bacillus weihenstephanensis), this protein is Transcription antitermination protein NusB.